We begin with the raw amino-acid sequence, 478 residues long: Noelin-2 (478 aa).

The signal sequence occupies residues 1–16; that stretch reads MSVPLLKIGAVLSTMA. Asn-33, Asn-98, Asn-179, Asn-299, Asn-334, Asn-423, and Asn-465 each carry an N-linked (GlcNAc...) asparagine glycan. 2 coiled-coil regions span residues 86–109 and 160–218; these read SREL…LELR and LEQY…QKLG. The region spanning 218-470 is the Olfactomedin-like domain; it reads GCGKLTGVSN…QVLYNVTLFH (253 aa). A disulfide bridge links Cys-219 with Cys-401.

Peripherally associated with AMPAR complex. AMPAR complex consists of an inner core made of 4 pore-forming GluA/GRIA proteins (GRIA1, GRIA2, GRIA3 and GRIA4) and 4 major auxiliary subunits arranged in a twofold symmetry. One of the two pairs of distinct binding sites is occupied either by CNIH2, CNIH3 or CACNG2, CACNG3. The other harbors CACNG2, CACNG3, CACNG4, CACNG8 or GSG1L. This inner core of AMPAR complex is complemented by outer core constituents binding directly to the GluA/GRIA proteins at sites distinct from the interaction sites of the inner core constituents. Outer core constituents include at least PRRT1, PRRT2, CKAMP44/SHISA9, FRRS1L and NRN1. The proteins of the inner and outer core serve as a platform for other, more peripherally associated AMPAR constituents, including OLFM2. Alone or in combination, these auxiliary subunits control the gating and pharmacology of the AMPAR complex and profoundly impact their biogenesis and protein processing. Interacts with GRIA2. Interacts with OLFM1 and OLFM3. Interacts with SRF; the interaction promotes dissociation of SRF from the transcriptional repressor HEY2. Interacts with RUNX2. As to expression, expressed in the brain (at protein level). Expressed in carotid arteries and the aorta, mainly in aortic SMCs.

The protein localises to the secreted. It is found in the synapse. Its subcellular location is the membrane. The protein resides in the nucleus. It localises to the cytoplasm. Functionally, involved in transforming growth factor beta (TGF-beta)-induced smooth muscle differentiation. TGF-beta induces expression and nuclear translocation of OLFM2 where it binds to SRF, causing its dissociation from the transcriptional repressor HEY2/HERP1 and facilitating binding of SRF to target genes. Plays a role in AMPAR complex organization. Is a regulator of vascular smooth-muscle cell (SMC) phenotypic switching, that acts by promoting RUNX2 and inhibiting MYOCD binding to SRF. SMC phenotypic switching is the process through which vascular SMCs undergo transition between a quiescent contractile phenotype and a proliferative synthetic phenotype in response to pathological stimuli. SMC phenotypic plasticity is essential for vascular development and remodeling. This Rattus norvegicus (Rat) protein is Noelin-2 (Olfm2).